Consider the following 263-residue polypeptide: Adaptin ear-binding coat-associated protein 2 (263 aa).

Disordered stretches follow at residues Lys167–Pro191 and Gly209–Phe263. Ser181 carries the post-translational modification Phosphoserine. 2 short sequence motifs (WXXF motif) span residues Gly218–Gly221 and Asp238–Gly241. Positions Ser246–Phe263 are enriched in low complexity.

The protein belongs to the NECAP family. As to quaternary structure, interacts with AP1G1 and AP2A1 components of the adapter protein complexes AP-1 and AP-2. Interacts with the GAE domain proteins GGA1, GGA2 and GGA3. In terms of tissue distribution, expressed in brain, heart, kidney, liver and lung (at protein level).

The protein localises to the cytoplasmic vesicle. It localises to the clathrin-coated vesicle membrane. The protein resides in the cell membrane. Its function is as follows. Involved in endocytosis. The chain is Adaptin ear-binding coat-associated protein 2 (Necap2) from Rattus norvegicus (Rat).